Here is a 1197-residue protein sequence, read N- to C-terminus: PAN2-PAN3 deadenylation complex catalytic subunit PAN2 (1197 aa).

WD repeat units follow at residues 153–193, 195–231, 244–280, and 328–367; these read DEAE…QKYT, EVPG…VEHE, VHGN…ATTP, and TVGP…TFNT. Residues 368–485 are linker; it reads YSRETDFALP…IGREEEPHLY (118 aa). In terms of domain architecture, USP spans 486 to 919; sequence MVAKKYRKVT…VPAILYYARR (434 aa). Residues 970–1142 form the Exonuclease domain; that stretch reads VGLDAEFVTL…EDARTALQLY (173 aa). Aspartate 973, glutamate 975, aspartate 1082, and aspartate 1134 together coordinate a divalent metal cation. Residues 1176–1197 are disordered; it reads VPEPDSQSSPKHGAVFPPVLAL.

Belongs to the peptidase C19 family. PAN2 subfamily. In terms of assembly, forms a heterotrimer with an asymmetric homodimer of the regulatory subunit PAN3 to form the poly(A)-nuclease (PAN) deadenylation complex. It depends on a divalent metal cation as a cofactor.

Its subcellular location is the cytoplasm. The protein resides in the P-body. It is found in the nucleus. The enzyme catalyses Exonucleolytic cleavage of poly(A) to 5'-AMP.. Positively regulated by the regulatory subunit PAN3. In terms of biological role, catalytic subunit of the poly(A)-nuclease (PAN) deadenylation complex, one of two cytoplasmic mRNA deadenylases involved in general and miRNA-mediated mRNA turnover. PAN specifically shortens poly(A) tails of RNA and the activity is stimulated by poly(A)-binding protein (PABP). PAN deadenylation is followed by rapid degradation of the shortened mRNA tails by the CCR4-NOT complex. Deadenylated mRNAs are then degraded by two alternative mechanisms, namely exosome-mediated 3'-5' exonucleolytic degradation, or deadenylation-dependent mRNA decaping and subsequent 5'-3' exonucleolytic degradation by XRN1. The polypeptide is PAN2-PAN3 deadenylation complex catalytic subunit PAN2 (Gallus gallus (Chicken)).